A 184-amino-acid polypeptide reads, in one-letter code: Photosystem I assembly protein Ycf4 (184 aa).

The next 2 helical transmembrane spans lie at 22-42 and 57-77; these read FGWACILFLGSLGFLVVGASS and IVFFPQGIVMSFYGIAGLFIS.

This sequence belongs to the Ycf4 family.

The protein resides in the plastid. It localises to the chloroplast thylakoid membrane. Functionally, seems to be required for the assembly of the photosystem I complex. The chain is Photosystem I assembly protein Ycf4 from Acorus calamus (Sweet flag).